Consider the following 323-residue polypeptide: uncharacterized protein (323 aa).

Transmembrane regions (helical) follow at residues 8 to 28, 32 to 52, and 92 to 112; these read FLVI…MFME, LTLL…PFSL, and ITIF…CGIF.

It localises to the mitochondrion membrane. This is an uncharacterized protein from Neurospora crassa (strain ATCC 24698 / 74-OR23-1A / CBS 708.71 / DSM 1257 / FGSC 987).